Consider the following 334-residue polypeptide: L-lactate dehydrogenase B chain (334 aa).

Ala2 is subject to N-acetylalanine. An N6-acetyllysine modification is found at Lys7. 2 positions are modified to phosphoserine: Ser11 and Ser44. NAD(+)-binding positions include 30–58 (GQVG…LEDK) and Arg100. An N6-acetyllysine modification is found at Lys58. Arg107 serves as a coordination point for substrate. Position 119 is an N6-acetyllysine (Lys119). Residue Asn139 participates in NAD(+) binding. Residues Asn139 and Arg170 each coordinate substrate. The Proton acceptor role is filled by His194. Position 240 is a phosphotyrosine (Tyr240). Residue Thr249 participates in substrate binding. Lys329 is modified (N6-acetyllysine).

This sequence belongs to the LDH/MDH superfamily. LDH family. In terms of assembly, homotetramer. Interacts with PTEN upstream reading frame protein MP31; the interaction leads to inhibition of mitochondrial lactate dehydrogenase activity, preventing conversion of lactate to pyruvate in mitochondria.

Its subcellular location is the cytoplasm. The protein localises to the mitochondrion inner membrane. The catalysed reaction is (S)-lactate + NAD(+) = pyruvate + NADH + H(+). It functions in the pathway fermentation; pyruvate fermentation to lactate; (S)-lactate from pyruvate: step 1/1. Functionally, interconverts simultaneously and stereospecifically pyruvate and lactate with concomitant interconversion of NADH and NAD(+). This is L-lactate dehydrogenase B chain (Ldhb) from Mus musculus (Mouse).